The primary structure comprises 207 residues: Cytochrome c biogenesis ATP-binding export protein CcmA (207 aa).

In terms of domain architecture, ABC transporter spans 4-207 (LEARELLCER…RISLTQTGAA (204 aa)). 36 to 43 (GSNGAGKT) serves as a coordination point for ATP.

This sequence belongs to the ABC transporter superfamily. CcmA exporter (TC 3.A.1.107) family. As to quaternary structure, the complex is composed of two ATP-binding proteins (CcmA) and two transmembrane proteins (CcmB).

It is found in the cell inner membrane. It catalyses the reaction heme b(in) + ATP + H2O = heme b(out) + ADP + phosphate + H(+). Part of the ABC transporter complex CcmAB involved in the biogenesis of c-type cytochromes; once thought to export heme, this seems not to be the case, but its exact role is uncertain. Responsible for energy coupling to the transport system. The chain is Cytochrome c biogenesis ATP-binding export protein CcmA from Escherichia coli O6:H1 (strain CFT073 / ATCC 700928 / UPEC).